The following is a 260-amino-acid chain: Snake venom serine protease KN14 (260 aa).

Residues 1–18 form the signal peptide; it reads MVLIRVLANLLILQLSYA. The propeptide occupies 19 to 24; that stretch reads QKSSEL. Positions 25–251 constitute a Peptidase S1 domain; it reads VIGGDECNIN…HLDWIQSIIA (227 aa). Cystine bridges form between C31–C165, C100–C258, C144–C212, C176–C191, and C202–C227. The active-site Charge relay system is the H67. N105 carries N-linked (GlcNAc...) asparagine glycosylation. The active-site Charge relay system is the D112. Residue N172 is glycosylated (N-linked (GlcNAc...) asparagine). The active-site Charge relay system is the S206. N-linked (GlcNAc...) asparagine glycans are attached at residues N213 and N255.

The protein belongs to the peptidase S1 family. Snake venom subfamily. In terms of assembly, monomer. In terms of tissue distribution, expressed by the venom gland.

Its subcellular location is the secreted. Functionally, snake venom serine protease that may act in the hemostasis system of the prey. In Trimeresurus stejnegeri (Chinese green tree viper), this protein is Snake venom serine protease KN14.